The primary structure comprises 143 residues: MRTTYMAKPHEVERKWYTIDATNKPLGRLASEIAEILRGKHKPTFTPHVDTGDYVIVLNAEKVLLTGKKRTQKHHYRHSGYPGGLKAINYETLLNTKPEKAIELAVKGMLPKNRLGRKMIKKLKVYAGDEHPHQAQQPEPWEG.

This sequence belongs to the universal ribosomal protein uL13 family. Part of the 50S ribosomal subunit.

In terms of biological role, this protein is one of the early assembly proteins of the 50S ribosomal subunit, although it is not seen to bind rRNA by itself. It is important during the early stages of 50S assembly. The chain is Large ribosomal subunit protein uL13 from Natranaerobius thermophilus (strain ATCC BAA-1301 / DSM 18059 / JW/NM-WN-LF).